Consider the following 98-residue polypeptide: Cell division topological specificity factor (98 aa).

The protein belongs to the MinE family.

In terms of biological role, prevents the cell division inhibition by proteins MinC and MinD at internal division sites while permitting inhibition at polar sites. This ensures cell division at the proper site by restricting the formation of a division septum at the midpoint of the long axis of the cell. This chain is Cell division topological specificity factor, found in Nitrosomonas eutropha (strain DSM 101675 / C91 / Nm57).